A 699-amino-acid polypeptide reads, in one-letter code: NAD(P)H-quinone oxidoreductase subunit 5, chloroplastic (699 aa).

15 helical membrane passes run 1–21 (WIIPFVPLPVPMLIGVGLLLF), 32–52 (WAFPSILLLSIVMIFSTNLSI), 81–101 (IDPLTSIMSMLITIVGITVLI), 117–137 (FAYMSFFSTSMLGLVTSSNLI), 139–159 (IYIFWELVGVCSYLLIGFWFT), 177–197 (GDFGLLLGILGFYWITGSFEF), 216–236 (LFVTLCAALLFAGAVAKSAQF), 250–270 (TPISALIHAATMVAEGIFLVA), 272–292 (LLPLFIVIPYIMNFISLIGII), 319–339 (LGYMMLALGMGSYRSALFHLI), 346–366 (ALLFLGSGSVIHSMETIVGYS), 388–408 (ISFLLGTLSLCGIPPLACFWS), 417–437 (WLYSPIFAIIAWATAGLTAFY), 539–559 (LFPLLILVLFTLFVGYLGISF), and 598–618 (IFSVSIAYFGILLASLLYKPI).

The protein belongs to the complex I subunit 5 family. As to quaternary structure, NDH is composed of at least 16 different subunits, 5 of which are encoded in the nucleus.

The protein localises to the plastid. It is found in the chloroplast thylakoid membrane. It catalyses the reaction a plastoquinone + NADH + (n+1) H(+)(in) = a plastoquinol + NAD(+) + n H(+)(out). The catalysed reaction is a plastoquinone + NADPH + (n+1) H(+)(in) = a plastoquinol + NADP(+) + n H(+)(out). NDH shuttles electrons from NAD(P)H:plastoquinone, via FMN and iron-sulfur (Fe-S) centers, to quinones in the photosynthetic chain and possibly in a chloroplast respiratory chain. The immediate electron acceptor for the enzyme in this species is believed to be plastoquinone. Couples the redox reaction to proton translocation, and thus conserves the redox energy in a proton gradient. This Digitalis grandiflora (Yellow foxglove) protein is NAD(P)H-quinone oxidoreductase subunit 5, chloroplastic (ndhF).